Consider the following 376-residue polypeptide: N-acetyldiaminopimelate deacetylase (376 aa).

The active site involves aspartate 69. The active-site Proton acceptor is glutamate 128.

Belongs to the peptidase M20A family. N-acetyldiaminopimelate deacetylase subfamily.

The catalysed reaction is N-acetyl-(2S,6S)-2,6-diaminopimelate + H2O = (2S,6S)-2,6-diaminopimelate + acetate. It functions in the pathway amino-acid biosynthesis; L-lysine biosynthesis via DAP pathway; LL-2,6-diaminopimelate from (S)-tetrahydrodipicolinate (acetylase route): step 3/3. Its function is as follows. Catalyzes the conversion of N-acetyl-diaminopimelate to diaminopimelate and acetate. The sequence is that of N-acetyldiaminopimelate deacetylase from Bacillus cereus (strain B4264).